Here is a 403-residue protein sequence, read N- to C-terminus: MIRGKVFYKGEFVEAGIEVENGRIKRIGKLVEGKEVKGVILPAGIDVHVHLRDFAEKRKETIETGTLSALHGGICLVVDQPNTKPPVDDAETYFRRMGKAEKSVYVDYALNLALTNSNHGKIGSIMRKISERYFVPAVGEVFIQHDSEDLQIDYETLSSVYKRFEGVVFTIHAEDPAYVARGSPNFVFRRREAEVLAVERLVELGKFHFCHISTKDSAKEILNSNSTYEVTPHHMLLSVEDYGRLGNLVNVNPPLREREDVEWLFRNFHRIDVLASDHAPHTLEDKEAGASGFPGVETMYPLFVNLASKGYISFKTLVEKIASNPARIFGFKGYGEIEVGNYANFAVFDLKKVDEIRAERLHSKCGWTPFEGFEAVFPDKVYLRGKELLENEMKAGNVLKKRV.

Zn(2+) contacts are provided by His-48 and His-50. Residues 50–52 (HLR) and Asn-82 each bind substrate. Positions 140, 172, 211, and 277 each coordinate Zn(2+). The active site involves Asp-277. Residue His-281 coordinates substrate.

Belongs to the metallo-dependent hydrolases superfamily. DHOase family. Class I DHOase subfamily. Zn(2+) is required as a cofactor.

It carries out the reaction (S)-dihydroorotate + H2O = N-carbamoyl-L-aspartate + H(+). It participates in pyrimidine metabolism; UMP biosynthesis via de novo pathway; (S)-dihydroorotate from bicarbonate: step 3/3. Functionally, catalyzes the reversible cyclization of carbamoyl aspartate to dihydroorotate. The sequence is that of Dihydroorotase from Archaeoglobus fulgidus (strain ATCC 49558 / DSM 4304 / JCM 9628 / NBRC 100126 / VC-16).